We begin with the raw amino-acid sequence, 463 residues long: Heterogeneous nuclear ribonucleoprotein K (463 aa).

Position 1 is an N-acetylmethionine (M1). The tract at residues 1 to 37 (METEQPEETFPNTETNGEFGKRPAEDMEEEQAFKRSR) is disordered. The tract at residues 1 to 276 (METEQPEETF…GRGGRPMPPS (276 aa)) is necessary for interaction with DDX1. Residues 19 to 37 (FGKRPAEDMEEEQAFKRSR) show a composition bias toward basic and acidic residues. K34 carries the N6-acetyllysine; alternate modification. K34 is covalently cross-linked (Glycyl lysine isopeptide (Lys-Gly) (interchain with G-Cter in SUMO1); alternate). K34 participates in a covalent cross-link: Glycyl lysine isopeptide (Lys-Gly) (interchain with G-Cter in SUMO2); alternate. The residue at position 36 (S36) is a Phosphoserine. T39 carries the phosphothreonine modification. Residues 42 to 104 (MVELRILLQS…ETIGEILKKI (63 aa)) enclose the KH 1 domain. Glycyl lysine isopeptide (Lys-Gly) (interchain with G-Cter in SUMO2) cross-links involve residues K52 and K60. 2 repeat units span residues 54–76 (AGAVIGKGGKNIKALRTDYNASV) and 59–62 (GKGG). The interval 54-421 (AGAVIGKGGK…QIRHESGASI (368 aa)) is 2 X 22 AA approximate repeats. The segment at 59–407 (GKGGKNIKAL…LAGSIIGKGG (349 aa)) is 5 X 4 AA repeats of G-X-G-G. 2 positions are modified to phosphoserine: S75 and S116. The KH 2 domain maps to 144–209 (DCELRLLIHQ…DRVVECIKII (66 aa)). K163 participates in a covalent cross-link: Glycyl lysine isopeptide (Lys-Gly) (interchain with G-Cter in SUMO1); alternate. A Glycyl lysine isopeptide (Lys-Gly) (interchain with G-Cter in SUMO2); alternate cross-link involves residue K163. N6-acetyllysine is present on K198. The segment at 209-337 (ILDLISESPI…RPGDRYDGMV (129 aa)) is interaction with ZIK1. Phosphoserine occurs at positions 214 and 216. Residue K219 forms a Glycyl lysine isopeptide (Lys-Gly) (interchain with G-Cter in SUMO2); alternate linkage. Position 219 is an N6-succinyllysine; alternate (K219). The interval 236–273 (YGGFTMMFDDRRGRPVGFPMRGRGGFDRMPPGRGGRPM) is RNA-binding RGG-box. 3 tandem repeats follow at residues 245-250 (DRRGRP), 257-260 (GRGG), and 267-270 (GRGG). The 2 X 6 AA repeats of D-R-R-G-R-P stretch occupies residues 245 to 329 (DRRGRPVGFP…LMAYDRRGRP (85 aa)). The segment at 250-329 (PVGFPMRGRG…LMAYDRRGRP (80 aa)) is disordered. Residues 252–266 (GFPMRGRGGFDRMPP) show a composition bias toward low complexity. A compositionally biased stretch (basic and acidic residues) spans 276–285 (SRRDYDDMSP). A Phosphoserine modification is found at S284. The 3-4 repeat unit spans residues 295-298 (GRGG). R316 bears the Omega-N-methylarginine mark. The 2-2 repeat unit spans residues 324-329 (DRRGRP). R377 carries the post-translational modification Omega-N-methylarginine. S379 carries the post-translational modification Phosphoserine. Y380 bears the Phosphotyrosine mark. The region spanning 387 to 451 (IITTQVTIPK…DQIQNAQYLL (65 aa)) is the KH 3 domain. Repeat copies occupy residues 399 to 421 (AGSIIGKGGQRIKQIRHESGASI) and 404 to 407 (GKGG). Position 405 is an N6-acetyllysine; alternate (K405). A Glycyl lysine isopeptide (Lys-Gly) (interchain with G-Cter in SUMO2); alternate cross-link involves residue K405. S420 is subject to Phosphoserine. K422 participates in a covalent cross-link: Glycyl lysine isopeptide (Lys-Gly) (interchain with G-Cter in SUMO1); alternate. Residue K422 forms a Glycyl lysine isopeptide (Lys-Gly) (interchain with G-Cter in SUMO2); alternate linkage. A Glycyl lysine isopeptide (Lys-Gly) (interchain with G-Cter in SUMO); alternate cross-link involves residue K422.

Identified in the spliceosome C complex. Interacts with ANKRD28, RBM42 and ZIK1. Interacts with DDX1. Interacts with MDM2; this interaction leads to ubiquitination and proteasomal degradation. Interacts with p53/TP53. Interacts with BRDT. Interacts with IVNS1ABP. Interacts with PPIA/CYPA. Part of a transcription inhibitory ribonucleoprotein complex composed at least of the circular RNA circZNF827, ZNF827 and HNRNPL. Sumoylated by CBX4. Sumoylation is increased upon DNA damage, such as that produced by doxorubicin, etoposide, UV light and camptothecin, due to enhanced CBX4 phosphorylation by HIPK2 under these conditions. In terms of processing, ubiquitinated by MDM2. Doxorubicin treatment does not affect monoubiquitination, but slightly decreases HNRNPK poly-ubiquitination. Post-translationally, O-glycosylated (O-GlcNAcylated), in a cell cycle-dependent manner.

It is found in the cytoplasm. The protein localises to the nucleus. The protein resides in the nucleoplasm. Its subcellular location is the cell projection. It localises to the podosome. Functionally, one of the major pre-mRNA-binding proteins. Binds tenaciously to poly(C) sequences. Likely to play a role in the nuclear metabolism of hnRNAs, particularly for pre-mRNAs that contain cytidine-rich sequences. Can also bind poly(C) single-stranded DNA. Plays an important role in p53/TP53 response to DNA damage, acting at the level of both transcription activation and repression. When sumoylated, acts as a transcriptional coactivator of p53/TP53, playing a role in p21/CDKN1A and 14-3-3 sigma/SFN induction. As far as transcription repression is concerned, acts by interacting with long intergenic RNA p21 (lincRNA-p21), a non-coding RNA induced by p53/TP53. This interaction is necessary for the induction of apoptosis, but not cell cycle arrest. As part of a ribonucleoprotein complex composed at least of ZNF827, HNRNPL and the circular RNA circZNF827 that nucleates the complex on chromatin, may negatively regulate the transcription of genes involved in neuronal differentiation. This chain is Heterogeneous nuclear ribonucleoprotein K (HNRNPK), found in Oryctolagus cuniculus (Rabbit).